The chain runs to 488 residues: 5'-3' exonuclease PLD3 (488 aa).

Residues 1 to 38 (MKPKLMYQELKVPVEEPAGELPMNEIEAWKAAEKKARW) are Cytoplasmic-facing. A helical; Signal-anchor for type II membrane protein transmembrane segment spans residues 39–59 (VLLVLILAVVGFGALMTQLFL). Over 60-488 (WEYGDLHLFG…DSVGNACRLL (429 aa)) the chain is Lumenal. 2 disulfides stabilise this stretch: C77–C237 and C81–C235. N-linked (GlcNAc...) asparagine glycosylation is found at N97 and N132. A PLD phosphodiesterase 1 domain is found at 194–221 (THGVLHTKFWVVDQTHFYLGSANMDWRS). Active-site residues include H199, K201, and D206. Residue H199 is the Proton donor of the active site. Phosphate contacts are provided by H199 and K201. N216 is a binding site for phosphate. N-linked (GlcNAc...) asparagine glycosylation is found at N234, N282, and N385. The cysteines at positions 364 and 485 are disulfide-linked. A PLD phosphodiesterase 2 domain is found at 409-435 (YARVNHNKYMVTERTTYIGTSNWSGSY). H414 serves as a coordination point for phosphate. The Nucleophile role is filled by H414. F436 lines the Mg(2+) pocket.

This sequence belongs to the phospholipase D family. Homodimer. Interacts with APP. Post-translationally, N-glycosylated. Proteolytically processed to a soluble form that is stable within endosomes and lysosomes. During transport through the secretory pathway becomes proteolysed by cysteine proteases, thereby releasing a stable soluble lysosomal lumenal polypeptide, whereas the transmembrane-bound fragment is rapidly degraded. Its transport route to lysosomes involves ubiquitination and the ESCRT complex. In terms of processing, ubiquitinated. Ubiquitination mediates sorting into lysosomes.

Its subcellular location is the endoplasmic reticulum membrane. It localises to the lysosome lumen. The protein resides in the early endosome membrane. It is found in the late endosome membrane. The protein localises to the golgi apparatus membrane. Its subcellular location is the endosome membrane. The enzyme catalyses Exonucleolytic cleavage in the 5'- to 3'-direction to yield nucleoside 3'-phosphates.. It carries out the reaction a 5'-end 5'-dephospho-ribonucleotidyl-ribonucleotide-RNA + H2O = a ribonucleoside 3'-phosphate + a 5'-end dephospho-ribonucleoside-RNA + H(+). It catalyses the reaction a ribonucleoside 3'-phosphate-2'-3'-cyclophospho-GMP + H2O = a ribonucleoside 3'-phosphate + 2',3'-cyclophospho-GMP + H(+). The catalysed reaction is a 5'-end 5'-dephospho-2'-deoxyribonucleotidyl-2'-deoxyribonucleotide in single-stranded DNA + H2O = a 5'-end dephospho-2'-deoxyribonucleoside in single-stranded DNA + a 2'-deoxyribonucleoside 3'-phosphate + H(+). The enzyme catalyses a 5'-end 5'-phospho-2'-deoxyribonucleotide in single-stranded DNA + H2O = a 5'-end 5'-dephospho-2'-deoxyribonucleotide in single-stranded DNA + phosphate. It carries out the reaction a 3-lyso-sn-glycero-1-phospho-(3'-acyl-1'-sn-glycerol) + a 1-acyl-sn-glycerol = a 3-acyl-sn-glycero-1-phospho-(3'-acyl-1'-sn-glycerol) + glycerol. It catalyses the reaction 3-lyso-sn-glycero-1-phospho-(3'-(9Z-octadecenoyl)-1'-sn-glycerol) + 1-(9Z-octadecenoyl)-sn-glycerol = 3-(9Z-octadecenoyl)-sn-glycero-1-phospho-(3'-(9Z-octadecenoyl)-1'-sn-glycerol) + glycerol. 5'-&gt;3' exonuclease that hydrolyzes the phosphodiester bond of single-stranded DNA (ssDNA) and RNA molecules to form nucleoside 3'-monophosphates and 5'-end 5'-hydroxy deoxyribonucleotide/ribonucleotide fragments. Partially redundant with PLD4, can cleave all four nucleotides displaying higher efficiency for ssDNA and RNA fragments initiated with uridine and guanosine residues and lower efficiency for cytidine-initiated substrates. As a result, it does not always degrade polynucleotides to the single nucleotide level, it can stall at specific sites sparing certain fragments from exonucleolytic degradation. Processes self and pathogenic ssDNA and RNA molecules that reach the endolysosomal compartment via phagocytosis or autophagy and may serve as 'danger' signals for recognition by innate immune receptors such as toll-like receptors (TLRs). Degrades mitochondrial CpG-rich ssDNA fragments to prevent TLR9 activation and autoinflammatory response, but it can cleave viral RNA to generate ligands for TLR7 activation and initiate antiviral immune responses. In plasmacytoid dendritic cells, it cooperates with endonuclease RNASET2 to release 2',3'-cyclic guanosine monophosphate (2',3'-cGMP), a potent stimulatory ligand for TLR7. Produces 2',3'-cGMPs and cytidine-rich RNA fragments that occupy TLR7 ligand-binding pockets and trigger a signaling-competent state. Can exert polynucleotide phosphatase activity toward 5'-phosphorylated ssDNA substrates although at a slow rate. Transphosphatidylase that catalyzes the exchange with R to S stereo-inversion of the glycerol moiety between (S,R)-lysophosphatidylglycerol (LPG) and monoacylglycerol (MAG) substrates to yield (S,S)-bis(monoacylglycero)phosphate (BMP). Can synthesize a variety of (S,S)-BMPs representing the main phospholipid constituent of lysosomal intralumenal vesicle (ILV) membranes that bind acid hydrolases for lipid degradation. Regulates the homeostasis and interorganellar communication of the endolysosomal system with an overall impact on cellular removal of dysfunctional organelles via autophagy as well as proper protein and lipid turnover. May play a role in myotube formation in response to ER stress. This is 5'-3' exonuclease PLD3 (Pld3) from Rattus norvegicus (Rat).